The primary structure comprises 590 residues: Type I inositol polyphosphate 5-phosphatase 1 (590 aa).

The disordered stretch occupies residues 47 to 73; that stretch reads DYSADSDDDYEDRSQEFDPISSGVTNP. A compositionally biased stretch (acidic residues) spans 48 to 57; that stretch reads YSADSDDDYE. Ser-60 is modified (phosphoserine). Catalytic regions lie at residues 445-460 and 523-538; these read ERII…INLS and GKRR…WNGK.

Belongs to the inositol polyphosphate 5-phosphatase family. As to expression, expressed ubiquitously.

The catalysed reaction is 1D-myo-inositol 1,4,5-trisphosphate + H2O = 1D-myo-inositol 1,4-bisphosphate + phosphate. The enzyme catalyses 1D-myo-inositol 1,3,4,5-tetrakisphosphate + H2O = 1D-myo-inositol 1,3,4-trisphosphate + phosphate. In terms of biological role, has phosphatase activity toward Ins(1,4,5)P3 and Ins(1,3,4,5)P4, but not toward Ins(1,4)P2, Ins(1)P. Seems to be involved in the abscisic acid (ABA) signaling pathway. Could also be able to hydrolyze PtdIns(4,5)P2 and PtdIns(3,4,5)P3. This is Type I inositol polyphosphate 5-phosphatase 1 from Arabidopsis thaliana (Mouse-ear cress).